The following is a 581-amino-acid chain: MAATKHSLADSEDRPTKKTKVDSEEKARLKAEKRERKEKKKSQESEPSAENSDADRAAEKERKKAKKAKKLEKKQKLAEAEASAEPAAEVSDEAPKKSKKEKKTTTTEASSNSEAPSSGSYIQTIALSNVPQAEIDEFLSKNEIHITDPKTENVTLRPVLEFHQLPATNLLEKKPSPFANYKAPTPIQSASWPFTLSGRDVIGVAETGSGKTMAFALPCVEAISALKHKHTKAVVVSPTRELAMQTYEQMASVAALNRMKCVCLYGGASKDDQRNLLNRGADIIVATPGRLKDFMSDGTVDLSHSAFAVLDEADRMLDKGFEEDIKMILSSCPPREKRQTLMFTATWPQSVQTLAATFMVSPVKIAIGSGGKETAGGAVELQANARISQSVEVLEPRGKEFRLLEVLKEHQQGSKKNDRILVFCLYKKEATRIENFLSRKGIRVGGIHGDLRQEQRTRSLEAFKSGQTPVLVATDVAARGLDIPEVKLVINVTFPLTIEDYVHRIGRTGRAGKTGQAITFFTVEDKSHSGSLVNILRGANQPVPEDLLKFGTTVKKKAHDMYGAFFKDVDMNAKSTKITFD.

The tract at residues M1 to S118 is disordered. 2 stretches are compositionally biased toward basic and acidic residues: residues S7 to E35 and D53 to R62. Residues K63–K73 show a composition bias toward basic residues. Low complexity-rich tracts occupy residues A80 to E89 and T106 to S118. The Q motif motif lies at L160–S189. The region spanning W192–I365 is the Helicase ATP-binding domain. A205–T212 contacts ATP. The DEAD box motif lies at D311–D314. The region spanning R402 to G551 is the Helicase C-terminal domain.

This sequence belongs to the DEAD box helicase family. DDX5/DBP2 subfamily.

The protein localises to the nucleus. It localises to the nucleolus. The enzyme catalyses ATP + H2O = ADP + phosphate + H(+). Its function is as follows. ATP-dependent RNA helicase required for 60S ribosomal subunit synthesis. Involved in efficient pre-rRNA processing, predominantly at site A3, which is necessary for the normal formation of 25S and 5.8S rRNAs. This chain is ATP-dependent RNA helicase DBP3 (DBP3), found in Gibberella zeae (strain ATCC MYA-4620 / CBS 123657 / FGSC 9075 / NRRL 31084 / PH-1) (Wheat head blight fungus).